Consider the following 321-residue polypeptide: YIDGDEGILLYHGYSIDQLAENGDFLETCYLLLYGELPNKQQKIDFDRCIMRHTMVHEQFARFFHGFRRDSHPMAVMVACLGAMSAFYHDSINITDPQQRMIASIRLISKVPTLAAMAYKYSIGQPFVYPRNDLNYATNFLHMCFSVPCEEHKISPVIARAMDRIFTLHADHEQNASTSTVRLAGSSGANPYACIAAGVACLWGPAHGGANEACLKMLQEIGSVKKIPEFIARAKDKNDPFRLMGFGHRVYKNYDPRAKIMQKTCHEVLQELNIQDDPLLDIAMELEHIALNDEYFINKKLYPNVDFYSGITLKALGFPTE.

Catalysis depends on residues His-248 and Asp-306.

The protein belongs to the citrate synthase family.

The catalysed reaction is oxaloacetate + acetyl-CoA + H2O = citrate + CoA + H(+). Its pathway is carbohydrate metabolism; tricarboxylic acid cycle; isocitrate from oxaloacetate: step 1/2. This chain is Citrate synthase (gltA), found in Bartonella bacilliformis.